We begin with the raw amino-acid sequence, 143 residues long: 3-hydroxyacyl-[acyl-carrier-protein] dehydratase FabZ (143 aa).

Histidine 48 is a catalytic residue.

Belongs to the thioester dehydratase family. FabZ subfamily.

The protein resides in the cytoplasm. The catalysed reaction is a (3R)-hydroxyacyl-[ACP] = a (2E)-enoyl-[ACP] + H2O. Its function is as follows. Involved in unsaturated fatty acids biosynthesis. Catalyzes the dehydration of short chain beta-hydroxyacyl-ACPs and long chain saturated and unsaturated beta-hydroxyacyl-ACPs. In Roseiflexus castenholzii (strain DSM 13941 / HLO8), this protein is 3-hydroxyacyl-[acyl-carrier-protein] dehydratase FabZ.